Here is a 229-residue protein sequence, read N- to C-terminus: Cytidylate kinase (229 aa).

Gly-12 to Thr-20 contributes to the ATP binding site.

Belongs to the cytidylate kinase family. Type 1 subfamily.

Its subcellular location is the cytoplasm. It catalyses the reaction CMP + ATP = CDP + ADP. The catalysed reaction is dCMP + ATP = dCDP + ADP. The sequence is that of Cytidylate kinase from Mesomycoplasma hyopneumoniae (strain 232) (Mycoplasma hyopneumoniae).